The chain runs to 201 residues: Thymidine kinase (201 aa).

Residues 9–16 (SAMNAGKS) and 87–90 (DECH) contribute to the ATP site. Glutamate 88 (proton acceptor) is an active-site residue. Zn(2+) contacts are provided by cysteine 145, cysteine 147, cysteine 182, and histidine 185.

The protein belongs to the thymidine kinase family. In terms of assembly, homotetramer.

Its subcellular location is the cytoplasm. The enzyme catalyses thymidine + ATP = dTMP + ADP + H(+). This is Thymidine kinase from Photorhabdus laumondii subsp. laumondii (strain DSM 15139 / CIP 105565 / TT01) (Photorhabdus luminescens subsp. laumondii).